A 202-amino-acid chain; its full sequence is Endothelin-1 (202 aa).

A signal peptide spans 1 to 25 (MDYFPMIFALLFVAFQGAPEAAVLG). A propeptide spanning residues 26-50 (TELSAGAEDGGEKPAPATPWRPRRS) is cleaved from the precursor. Cystine bridges form between cysteine 53–cysteine 67 and cysteine 55–cysteine 63. A propeptide spanning residues 74 to 202 (VNTPEHVVPY…DKKVIYNRAH (129 aa)) is cleaved from the precursor. The segment at 110-124 (CQCASQTDKKCWNFC) is endothelin-like.

This sequence belongs to the endothelin/sarafotoxin family.

Its subcellular location is the secreted. In terms of biological role, endothelins are endothelium-derived vasoconstrictor peptides. Probable ligand for G-protein coupled receptors EDNRA and EDNRB which activates PTK2B, BCAR1, BCAR3 and, GTPases RAP1 and RHOA cascade in glomerular mesangial cells. Also binds the DEAR/FBXW7-AS1 receptor. Promotes mesenteric arterial wall remodeling via activation of ROCK signaling and subsequent colocalization of NFATC3 with F-actin filaments. NFATC3 then translocates to the nucleus where it subsequently promotes the transcription of the smooth muscle hypertrophy and differentiation marker ACTA2. The sequence is that of Endothelin-1 (EDN1) from Bos taurus (Bovine).